Consider the following 465-residue polypeptide: Pancreatic triacylglycerol lipase (465 aa).

A signal peptide spans 1 to 16; sequence MLMLWTFAVLLGAVAG. Cystine bridges form between C20/C26 and C107/C118. S169 serves as the catalytic Nucleophile. Catalysis depends on D193, which acts as the Charge relay system. Ca(2+) contacts are provided by E204, R207, D209, and D212. Residues C254 and C278 are joined by a disulfide bond. Catalysis depends on H280, which acts as the Charge relay system. 3 disulfide bridges follow: C302/C313, C316/C321, and C449/C465. The 111-residue stretch at 355 to 465 folds into the PLAT domain; sequence WRYQVTVTLS…EDVLLTLSPC (111 aa).

Belongs to the AB hydrolase superfamily. Lipase family. In terms of assembly, forms a 1:1 stoichiometric complex with (pro)colipase/CLPS. As to expression, pancreas.

Its subcellular location is the secreted. The catalysed reaction is a triacylglycerol + H2O = a diacylglycerol + a fatty acid + H(+). The enzyme catalyses 1,2,3-tri-(9Z-octadecenoyl)-glycerol + H2O = di-(9Z)-octadecenoylglycerol + (9Z)-octadecenoate + H(+). It carries out the reaction 1,2,3-tributanoylglycerol + H2O = dibutanoylglycerol + butanoate + H(+). It catalyses the reaction all-trans-retinyl hexadecanoate + H2O = all-trans-retinol + hexadecanoate + H(+). The catalysed reaction is 1,2-di-(9Z-octadecenoyl)-glycerol + H2O = (9Z-octadecenoyl)-glycerol + (9Z)-octadecenoate + H(+). Inhibited by bile salts, is reactivated by (pro)colipase/CLPS. In terms of biological role, plays an important role in fat metabolism. It preferentially splits the esters of long-chain fatty acids at positions 1 and 3, producing mainly 2-monoacylglycerol and free fatty acids, and shows considerably higher activity against insoluble emulsified substrates than against soluble ones. This Mus musculus (Mouse) protein is Pancreatic triacylglycerol lipase.